Reading from the N-terminus, the 323-residue chain is Flavone synthase cfoJ (323 aa).

FMN is required as a cofactor.

It participates in secondary metabolite biosynthesis; flavonoid biosynthesis. In terms of biological role, FMN-dependent oxidoreductase; part of the gene cluster that mediates the biosynthesis of chlorflavonin, a fungal flavonoid with acetolactate synthase inhibitory activity. Within the pathway, cfoJ acts as a flavone synthase (FNS) and catalyzes the formation of a double bond between C2 and C3, converting the flavanone into a flavone. The pathway begins with the PKS-NRPS hybrid synthetase cfoA that uses benzoic acid or p-hydroxybenzoic acid as a starter unit with four rounds of chain elongation using malonyl-CoA to form the chalcone skeleton. Then, a new type of chalcone isomerase, cfoK, catalyzes the conversion of the chalcone into a flavanone by a histidine-mediated oxa-Michael addition mechanism. The desaturation of flavanone to flavone is catalyzed by a new type of flavone synthase, the flavin mononucleotide (FMN)-dependent oxidoreductase cfoJ. Monooxygenases cfoF, cfoG, and P450 cfoH are responsible for the hydroxylation of the flavonoid skeleton at sites C3, C8, and C2', respectively. Like cfoF, the dehydratase cfoI plays also a role in the hydroxylation of position C3. Methyltransferases cfoB, cfoC, and cfoD then catalyze the methylation of C7-OH, C8-OH, and C3-OH, respectively. Finally, the monooxygenase cfoE is responsible for the chlorination of flavonoid at position C3'. The protein is Flavone synthase cfoJ of Aspergillus candidus.